Consider the following 295-residue polypeptide: uncharacterized protein (295 aa).

This sequence belongs to the ROK (NagC/XylR) family.

This is an uncharacterized protein from Clostridium perfringens (strain 13 / Type A).